A 289-amino-acid chain; its full sequence is Bifunctional protein FolD (289 aa).

Residues 165–167 and Ser190 contribute to the NADP(+) site; that span reads GAS.

This sequence belongs to the tetrahydrofolate dehydrogenase/cyclohydrolase family. In terms of assembly, homodimer.

The enzyme catalyses (6R)-5,10-methylene-5,6,7,8-tetrahydrofolate + NADP(+) = (6R)-5,10-methenyltetrahydrofolate + NADPH. It catalyses the reaction (6R)-5,10-methenyltetrahydrofolate + H2O = (6R)-10-formyltetrahydrofolate + H(+). The protein operates within one-carbon metabolism; tetrahydrofolate interconversion. Its function is as follows. Catalyzes the oxidation of 5,10-methylenetetrahydrofolate to 5,10-methenyltetrahydrofolate and then the hydrolysis of 5,10-methenyltetrahydrofolate to 10-formyltetrahydrofolate. The sequence is that of Bifunctional protein FolD from Ralstonia nicotianae (strain ATCC BAA-1114 / GMI1000) (Ralstonia solanacearum).